We begin with the raw amino-acid sequence, 58 residues long: MIKIFIGHYINVFYSTADITLKKQPLLFLAKLMVYSAALTFFTANFHCNMTRKINEYA.

This is Protein YecU from Escherichia coli (strain K12).